We begin with the raw amino-acid sequence, 162 residues long: uncharacterized protein (162 aa).

This is an uncharacterized protein from Bacillus subtilis (strain 168).